A 353-amino-acid chain; its full sequence is Ferredoxin--NADP reductase (353 aa).

The FAD site is built by Thr-25, Glu-44, Gln-52, Tyr-57, Val-97, Phe-132, Asp-298, and Ser-339.

Belongs to the ferredoxin--NADP reductase type 2 family. In terms of assembly, homodimer. FAD is required as a cofactor.

The enzyme catalyses 2 reduced [2Fe-2S]-[ferredoxin] + NADP(+) + H(+) = 2 oxidized [2Fe-2S]-[ferredoxin] + NADPH. The protein is Ferredoxin--NADP reductase of Chlorobium chlorochromatii (strain CaD3).